The following is a 63-amino-acid chain: Beta-defensin 5 (63 aa).

The signal sequence occupies residues 1 to 22 (MRIHYLLFSFLLVLLSPLSVFT). At Q23 the chain carries Pyrrolidone carboxylic acid. Intrachain disulfides connect C31–C59, C38–C52, and C42–C60.

The protein belongs to the beta-defensin family.

The protein resides in the secreted. Has antibacterial activity. This is Beta-defensin 5 (Defb5) from Rattus norvegicus (Rat).